The primary structure comprises 371 residues: MALETFVNSEPFTFGVELEIQVVNTHNYDLTKAASDLMRLIQGETFPGNITPEITESMIELSTGICHSHEQAVSELHAIRDVLVKAADQLNVGLAGGGTHAFQQWSDRQIYDAPRFQYISELYGYLAKQFTVFGQHVHIGCPDPDSALFLLHSMSRFIPHFIALSASSPFVQNVDTGFHSARLNSVFAFPLSGRAPFVLTWDSFEEYFTKMVNTGVVNSMKDFYWDIRPKPGYGTIEVRVMDTPLSVDRAAAIACYIQTLARYLLTDRPLKLSEDDYLVYTFNRFEACRFGLEGTCVNPQTGERRTIAEDILDTLDRIAPHAAALGSRAALDEIGALAKARVNDASWLRTVFKQEKSLNETVRQQCLRWRE.

This sequence belongs to the glutamate--cysteine ligase type 2 family. YbdK subfamily.

The catalysed reaction is L-cysteine + L-glutamate + ATP = gamma-L-glutamyl-L-cysteine + ADP + phosphate + H(+). Its function is as follows. ATP-dependent carboxylate-amine ligase which exhibits weak glutamate--cysteine ligase activity. This is Putative glutamate--cysteine ligase 2 from Burkholderia cenocepacia (strain HI2424).